Here is a 321-residue protein sequence, read N- to C-terminus: Protein ATP1B4 (321 aa).

The tract at residues 1–41 (MEPGMEMNTASEGGTRRGPENKHEEKVQDPNRGEAETKAEM) is disordered. Topologically, residues 1 to 72 (MEPGMEMNTA…RTCMGRTAKS (72 aa)) are cytoplasmic. Over residues 14-41 (GTRRGPENKHEEKVQDPNRGEAETKAEM) the composition is skewed to basic and acidic residues. Residues 73-93 (WGLILLFYFIFYTCLAGMFAF) traverse the membrane as a helical segment. Residues 94–321 (CMYVMLLTLS…RIIFTLSIGK (228 aa)) are Extracellular-facing. 3 N-linked (GlcNAc...) asparagine glycosylation sites follow: Asn132, Asn176, and Asn193. A disulfide bond links Cys165 and Cys184. Intrachain disulfides connect Cys194/Cys210 and Cys233/Cys293. 3 N-linked (GlcNAc...) asparagine glycosylation sites follow: Asn239, Asn252, and Asn270.

The protein belongs to the X(+)/potassium ATPases subunit beta family. In terms of assembly, composed of two subunits: alpha (catalytic) and beta (accessory). Post-translationally, glycosylated. In terms of tissue distribution, expressed in skeletal muscle, intestine, heart, brain, retina, inner ear and skin.

Its subcellular location is the membrane. Functionally, this is the non-catalytic component of the active enzyme, which catalyzes the hydrolysis of ATP coupled with the exchange of Na(+) and K(+) ions across the plasma membrane. The chain is Protein ATP1B4 (ATP1B4) from Gallus gallus (Chicken).